The sequence spans 555 residues: Undecaprenyl phosphate-alpha-4-amino-4-deoxy-L-arabinose arabinosyl transferase (555 aa).

Transmembrane regions (helical) follow at residues G6 to G26, F87 to M107, L116 to L136, F178 to I198, L206 to L226, A257 to L277, E293 to G313, L315 to E335, V351 to L371, P384 to V404, and W411 to Q431.

This sequence belongs to the glycosyltransferase 83 family.

The protein resides in the cell inner membrane. The catalysed reaction is 4-amino-4-deoxy-alpha-L-arabinopyranosyl di-trans,octa-cis-undecaprenyl phosphate + lipid IVA = lipid IIA + di-trans,octa-cis-undecaprenyl phosphate.. It participates in lipopolysaccharide metabolism; 4-amino-4-deoxy-beta-L-arabinose-lipid A biosynthesis. Its function is as follows. Catalyzes the transfer of the L-Ara4N moiety of the glycolipid undecaprenyl phosphate-alpha-L-Ara4N to lipid A. The modified arabinose is attached to lipid A and is required for resistance to polymyxin and cationic antimicrobial peptides. In Serratia proteamaculans (strain 568), this protein is Undecaprenyl phosphate-alpha-4-amino-4-deoxy-L-arabinose arabinosyl transferase.